The primary structure comprises 96 residues: Co-chaperonin GroES (96 aa).

This sequence belongs to the GroES chaperonin family. As to quaternary structure, heptamer of 7 subunits arranged in a ring. Interacts with the chaperonin GroEL.

The protein localises to the cytoplasm. Its function is as follows. Together with the chaperonin GroEL, plays an essential role in assisting protein folding. The GroEL-GroES system forms a nano-cage that allows encapsulation of the non-native substrate proteins and provides a physical environment optimized to promote and accelerate protein folding. GroES binds to the apical surface of the GroEL ring, thereby capping the opening of the GroEL channel. The sequence is that of Co-chaperonin GroES from Albidiferax ferrireducens (strain ATCC BAA-621 / DSM 15236 / T118) (Rhodoferax ferrireducens).